The primary structure comprises 572 residues: MSYRVTGDAARKARERYELKQAAAEFYRKRNVPERLEEALNSTFCLGPEDVYGHLANYFAQFSMPPTICQIRGRKVLDGSGEPTVEVEVSCTVKNSDKRICSSVISAVSEHPKASEGLEQERNHSADTAIQWLKDLSPLLKGMSPNEQHNIDQLLSDFYQPKIEEEKARRQMEREASPMAIEPVPSPVTSPALGKKKGSGKGKKAVVMEKPIPPKEAPEPVVPGSPAIGALSLAVAKASSVLGKTPLYLHIATLRNEKLPSEFIMPTPMISVLSCGKSSPGKLNLMKEVLVIPPTGLTVQQSLDMALMLQNQIVKQINSISKTGPAIKNVTPLGCMLIGGDRIEQPLDLICEACQHVGLELGRNLYLAINCAAHELMDYNKAKYEALSGTFKSPDEMVDLYVDLINRQPAILALLDPLRKEDAAQWESLTKALGSKCFLFADAASKPVCKLLESADIHNPPCSGTVIKHTNETTVSQLLGSFKLIEGENRVTILGCPCEESVDDSIADLAVGLGARFVKLGGLLRGERSSKYNRLLAIEDELTQAGTLGFWTKHEFPILSDVENLPGPEEVE.

The disordered stretch occupies residues Ile-181–Lys-204. Positions Gly-194 to Lys-204 are enriched in basic residues. Glu-288 contributes to the substrate binding site. The active-site Proton acceptor is Lys-468. Lys-519 serves as a coordination point for substrate.

The protein belongs to the enolase family.

It carries out the reaction (2R)-2-phosphoglycerate = phosphoenolpyruvate + H2O. The protein operates within carbohydrate degradation; glycolysis; pyruvate from D-glyceraldehyde 3-phosphate: step 4/5. The polypeptide is Enolase 4 (eno4) (Xenopus laevis (African clawed frog)).